Consider the following 350-residue polypeptide: Protein Wnt-8b (350 aa).

An N-terminal signal peptide occupies residues 1–21 (MFLMKPVCVLLVTCVLHRSHA). An intrachain disulfide couples C53 to C64. N-linked (GlcNAc...) asparagine glycosylation occurs at N102. Cystine bridges form between C103–C111, C113–C131, C179–C193, C181–C188, C255–C293, C271–C286, C290–C332, C308–C323, C310–C320, and C315–C316. Residue S185 is the site of O-palmitoleoyl serine attachment. N258 is a glycosylation site (N-linked (GlcNAc...) asparagine).

Belongs to the Wnt family. Post-translationally, palmitoleoylation is required for efficient binding to frizzled receptors. Depalmitoleoylation leads to Wnt signaling pathway inhibition. Proteolytic processing by TIKI1 and TIKI2 promotes oxidation and formation of large disulfide-bond oligomers, leading to inactivation of WNT8B.

Its subcellular location is the secreted. It localises to the extracellular space. It is found in the extracellular matrix. Ligand for members of the frizzled family of seven transmembrane receptors. May play an important role in the development and differentiation of certain forebrain structures, notably the hippocampus. This Mus musculus (Mouse) protein is Protein Wnt-8b (Wnt8b).